The sequence spans 308 residues: MKHYEVEILDAKTREKLCFLDKVEPQATIAEIKNLFTKTHPQWYPARQSLRLDPKGKSLKDEDVLQKLPVGTTATLYFRDLGAQISWVTVFLTEYAGPLFIYLLFYFRVPFIYGRKYDFTSSRHTVVHLACICHSFHYIKRLLETLFVHRFSHGTMPLRNIFKNCTYYWGFAAWMAYYINHPLYTPPTYGAQQVKLALAIFVICQLGNFSIHMALRDLRPAGSKTRKIPYPTRNPFTWLFLLVSCPNYTYEVGSWIGFAIMTQCLPVALFSLVGFTQMTIWAKGKHRSYLKEFRDYPPLRMPIIPFLL.

Topologically, residues Met1–Ser86 are cytoplasmic. At Lys22 the chain carries N6-acetyllysine. Residue Ser58 is modified to Phosphoserine. The residue at position 60 (Lys60) is an N6-acetyllysine. The chain crosses the membrane as a helical span at residues Trp87–Tyr106. The Lumenal portion of the chain corresponds to Phe107 to His124. The helical transmembrane segment at Thr125–Phe147 threads the bilayer. At Val148–Leu158 the chain is on the cytoplasmic side. Residues Arg159–Asn180 form a helical membrane-spanning segment. Residues His181–Tyr189 lie on the Lumenal side of the membrane. Residues Gly190–Arg216 traverse the membrane as a helical segment. Topologically, residues Asp217–Cys245 are cytoplasmic. The helical transmembrane segment at Pro246 to Thr262 threads the bilayer. Residues Gln263–Cys264 are Lumenal-facing. A helical transmembrane segment spans residues Leu265–Glu292. Residues Phe293 to Leu308 are Cytoplasmic-facing.

This sequence belongs to the steroid 5-alpha reductase family. As to quaternary structure, interacts with ELOVL1 and LASS2. Post-translationally, glycosylated.

It is found in the endoplasmic reticulum membrane. It catalyses the reaction a very-long-chain 2,3-saturated fatty acyl-CoA + NADP(+) = a very-long-chain (2E)-enoyl-CoA + NADPH + H(+). The catalysed reaction is octadecanoyl-CoA + NADP(+) = (2E)-octadecenoyl-CoA + NADPH + H(+). It carries out the reaction (2E,7Z,10Z,13Z,16Z)-docosapentaenoyl-CoA + NADPH + H(+) = (7Z,10Z,13Z,16Z)-docosatetraenoyl-CoA + NADP(+). The enzyme catalyses (2E,7Z,10Z,13Z,16Z,19Z)-docosahexaenoyl-CoA + NADPH + H(+) = (7Z,10Z,13Z,16Z,19Z)-docosapentaenoyl-CoA + NADP(+). It catalyses the reaction (2E,8Z,11Z,14Z)-eicosatetraenoyl-CoA + NADPH + H(+) = (8Z,11Z,14Z)-eicosatrienoyl-CoA + NADP(+). The catalysed reaction is (2E)-hexadecenoyl-CoA + NADPH + H(+) = hexadecanoyl-CoA + NADP(+). Its pathway is lipid metabolism; fatty acid biosynthesis. The protein operates within lipid metabolism; sphingolipid metabolism. Functionally, involved in both the production of very long-chain fatty acids for sphingolipid synthesis and the degradation of the sphingosine moiety in sphingolipids through the sphingosine 1-phosphate metabolic pathway. Catalyzes the last of the four reactions of the long-chain fatty acids elongation cycle. This endoplasmic reticulum-bound enzymatic process, allows the addition of 2 carbons to the chain of long- and very long-chain fatty acids/VLCFAs per cycle. This enzyme reduces the trans-2,3-enoyl-CoA fatty acid intermediate to an acyl-CoA that can be further elongated by entering a new cycle of elongation. Thereby, it participates in the production of VLCFAs of different chain lengths that are involved in multiple biological processes as precursors of membrane lipids and lipid mediators. Catalyzes the saturation step of the sphingosine 1-phosphate metabolic pathway, the conversion of trans-2-hexadecenoyl-CoA to palmitoyl-CoA. The protein is Very-long-chain enoyl-CoA reductase (TECR) of Bos taurus (Bovine).